Here is a 615-residue protein sequence, read N- to C-terminus: Protease 4 (615 aa).

At 1-17 (MFQVLKFCWKVLCFIRD) the chain is on the cytoplasmic side. The chain crosses the membrane as a helical span at residues 18-38 (LVMNVVFLGFVLLLVAIISFS). Topologically, residues 39 to 615 (SGGKKSTALT…LYCLNCGKVK (577 aa)) are periplasmic. Lys-201 (proton donor/acceptor) is an active-site residue. Ser-405 serves as the catalytic Nucleophile.

This sequence belongs to the peptidase S49 family. In terms of assembly, homotetramer.

It localises to the cell inner membrane. In terms of biological role, digests cleaved signal peptides in vitro, its in vivo function is unknown. This activity is necessary to maintain proper secretion of mature proteins across the membrane. This is Protease 4 (sppA) from Haemophilus influenzae (strain ATCC 51907 / DSM 11121 / KW20 / Rd).